Consider the following 245-residue polypeptide: MYRYKITIEYLGTNLAGWQRQAGVMSVQQILEEAIYKFSGEQVILFGSGRTDAGVHAIGQVAHFDLSKYLEPHKIITAINYFARPYAVVVWHCAIVLNDFHARFSATSRHYIYRIINRPYPSVIDLNRAWWISSPLDVLAMQKAAAYLLGKHDFTSFRASSCQSKSPIKTLTELNIVKGDEEIKLYLSAPSFLHHMVRNIVGSLVLVGKNIWQAEHIKDVLEAKDRKAAGLTAPAYGLYFVKTEY.

D52 (nucleophile) is an active-site residue. Y111 contacts substrate.

The protein belongs to the tRNA pseudouridine synthase TruA family. In terms of assembly, homodimer.

It carries out the reaction uridine(38/39/40) in tRNA = pseudouridine(38/39/40) in tRNA. Functionally, formation of pseudouridine at positions 38, 39 and 40 in the anticodon stem and loop of transfer RNAs. This is tRNA pseudouridine synthase A from Rickettsia akari (strain Hartford).